Here is a 283-residue protein sequence, read N- to C-terminus: 4-diphosphocytidyl-2-C-methyl-D-erythritol kinase (283 aa).

The active site involves Lys-10. 99–109 (PMGGGLGGGSS) contacts ATP. Asp-141 is a catalytic residue.

Belongs to the GHMP kinase family. IspE subfamily. As to quaternary structure, homodimer.

The enzyme catalyses 4-CDP-2-C-methyl-D-erythritol + ATP = 4-CDP-2-C-methyl-D-erythritol 2-phosphate + ADP + H(+). The protein operates within isoprenoid biosynthesis; isopentenyl diphosphate biosynthesis via DXP pathway; isopentenyl diphosphate from 1-deoxy-D-xylulose 5-phosphate: step 3/6. Functionally, catalyzes the phosphorylation of the position 2 hydroxy group of 4-diphosphocytidyl-2C-methyl-D-erythritol. This Shigella dysenteriae serotype 1 (strain Sd197) protein is 4-diphosphocytidyl-2-C-methyl-D-erythritol kinase.